A 1062-amino-acid polypeptide reads, in one-letter code: Carbamoyl phosphate synthase large chain (1062 aa).

Positions 1 to 401 (MPKRTDIHKI…AMQKAVQSLE (401 aa)) are carboxyphosphate synthetic domain. The ATP site is built by arginine 129, arginine 169, glycine 175, glycine 176, lysine 208, isoleucine 210, glutamate 215, glycine 241, isoleucine 242, histidine 243, glutamine 284, and glutamate 298. The 195-residue stretch at 133-327 (KELCQKLGEP…IAKMAAKIAI (195 aa)) folds into the ATP-grasp 1 domain. Mg(2+) is bound by residues glutamine 284, glutamate 298, and asparagine 300. Mn(2+) contacts are provided by glutamine 284, glutamate 298, and asparagine 300. The tract at residues 402 to 546 (IDEKDLYSAK…YSTYDGENES (145 aa)) is oligomerization domain. The segment at 547–929 (RKSGKKSVIV…ALYKAFAGAK (383 aa)) is carbamoyl phosphate synthetic domain. Positions 671–861 (DQIIKSLHLH…MAQVATRVIM (191 aa)) constitute an ATP-grasp 2 domain. ATP-binding residues include arginine 707, aspartate 746, leucine 748, glutamate 752, glycine 777, valine 778, histidine 779, serine 780, glutamine 820, and glutamate 832. The Mg(2+) site is built by glutamine 820, glutamate 832, and asparagine 834. Positions 820, 832, and 834 each coordinate Mn(2+). The MGS-like domain maps to 930 to 1062 (MQLPENGNVL…NRSFATDALK (133 aa)). Positions 930 to 1062 (MQLPENGNVL…NRSFATDALK (133 aa)) are allosteric domain.

It belongs to the CarB family. As to quaternary structure, composed of two chains; the small (or glutamine) chain promotes the hydrolysis of glutamine to ammonia, which is used by the large (or ammonia) chain to synthesize carbamoyl phosphate. Tetramer of heterodimers (alpha,beta)4. Requires Mg(2+) as cofactor. It depends on Mn(2+) as a cofactor.

It catalyses the reaction hydrogencarbonate + L-glutamine + 2 ATP + H2O = carbamoyl phosphate + L-glutamate + 2 ADP + phosphate + 2 H(+). The catalysed reaction is hydrogencarbonate + NH4(+) + 2 ATP = carbamoyl phosphate + 2 ADP + phosphate + 2 H(+). Its pathway is amino-acid biosynthesis; L-arginine biosynthesis; carbamoyl phosphate from bicarbonate: step 1/1. It functions in the pathway pyrimidine metabolism; UMP biosynthesis via de novo pathway; (S)-dihydroorotate from bicarbonate: step 1/3. Functionally, large subunit of the glutamine-dependent carbamoyl phosphate synthetase (CPSase). CPSase catalyzes the formation of carbamoyl phosphate from the ammonia moiety of glutamine, carbonate, and phosphate donated by ATP, constituting the first step of 2 biosynthetic pathways, one leading to arginine and/or urea and the other to pyrimidine nucleotides. The large subunit (synthetase) binds the substrates ammonia (free or transferred from glutamine from the small subunit), hydrogencarbonate and ATP and carries out an ATP-coupled ligase reaction, activating hydrogencarbonate by forming carboxy phosphate which reacts with ammonia to form carbamoyl phosphate. The chain is Carbamoyl phosphate synthase large chain from Lactobacillus helveticus (strain DPC 4571).